The sequence spans 156 residues: Ribosome maturation factor RimP (156 aa).

Belongs to the RimP family.

The protein localises to the cytoplasm. In terms of biological role, required for maturation of 30S ribosomal subunits. This is Ribosome maturation factor RimP from Bacillus cereus (strain G9842).